Reading from the N-terminus, the 351-residue chain is Tropomodulin-2 (351 aa).

Ser25 is subject to Phosphoserine.

Belongs to the tropomodulin family. Binds to the N-terminus of tropomyosin and to actin. Binds to TMBr3 as well as to other low molecular mass tropomyosins (TM5a or TM5), but not to high molecular mass tropomyosins (TM2 or TMBr1). As to expression, neuronal-tissue specific.

The protein localises to the cytoplasm. It localises to the cytoskeleton. Functionally, blocks the elongation and depolymerization of the actin filaments at the pointed end. The Tmod/TM complex contributes to the formation of the short actin protofilament, which in turn defines the geometry of the membrane skeleton. This chain is Tropomodulin-2 (Tmod2), found in Rattus norvegicus (Rat).